A 344-amino-acid chain; its full sequence is Flavonoid 7-O-methyltransferase 1A (344 aa).

Asp-211 contacts S-adenosyl-L-methionine. His-249 acts as the Proton acceptor in catalysis.

Belongs to the class I-like SAM-binding methyltransferase superfamily. Cation-independent O-methyltransferase family. As to quaternary structure, homodimer.

The enzyme catalyses apigenin + S-adenosyl-L-methionine = genkwanin + S-adenosyl-L-homocysteine + H(+). The catalysed reaction is luteolin + S-adenosyl-L-methionine = luteolin 7-methyl ether + S-adenosyl-L-homocysteine + H(+). It catalyses the reaction quercetin + S-adenosyl-L-methionine = rhamnetin + S-adenosyl-L-homocysteine + H(+). It carries out the reaction (2S)-naringenin + S-adenosyl-L-methionine = (2S)-sakuranetin + S-adenosyl-L-homocysteine + H(+). The enzyme catalyses kaempferol + S-adenosyl-L-methionine = kaempferol 7-methyl ether + S-adenosyl-L-homocysteine + H(+). The catalysed reaction is isorhamnetin + S-adenosyl-L-methionine = rhamnacene + S-adenosyl-L-homocysteine + H(+). It catalyses the reaction 4',7,8-trihydroxyflavone + S-adenosyl-L-methionine = 4',8-dihydroxy-7-methoxyflavone + S-adenosyl-L-homocysteine. It carries out the reaction scutellarein + S-adenosyl-L-methionine = scutellarein 7-methyl ether + S-adenosyl-L-homocysteine. It participates in flavonoid metabolism. In terms of biological role, flavonoid 7-O-methyltransferase involved in the biosynthesis of polymethoxylated flavonoids natural products such as pebrellin, aroma compounds which contribute to the flavor of peppermint, and exhibit pharmacological activities such as anti-allergic, anti-oxidant, antibacterial, anti-proliferative, and anti-inflammatory effects. Catalyzes S-adenosylmethionine-dependent regioselective 7-O-methylation of flavonoids; active on various hydroxylated flavonoid substrates, including luteolin (LUT), quercetin, kaempferol, isorhamnetin, apigenin (API), scutellarein (6-hydroxy-apigenin, 6-OH-API, SCU), 7,8,4'-trihydroxy-flavone and naringenin (NAR), and, with a lower efficiency, 7,8,3',4'-tetrahydroxy-flavone, taxifolin, hesperetin and genistein. The sequence is that of Flavonoid 7-O-methyltransferase 1A from Mentha piperita (Peppermint).